The chain runs to 342 residues: MGGNSTELQKILPALEKVVPVLAPGRHKGQAGKIAVIGGCREYTGAPYFAAISALKMGADLAHVFCTSGAATVIKSYSPELIVHPVLHESYDVGEIGEEEISGLKDKVLAEVGKWLQRFDCIVIGPGLGRDPILLDCVAAIIEEAKFKNIPLVLDGDGLFLVTNQPELIIGYPLAILTPNVMEHKRLVAKIVGERDQNVPQNPEVSNEDLPGQLQDLAKRMEGVTILQKGKTDYISDGKTVLSSDYYGSPRRCGGQGDVLSGSTAVFVSWAKEYFSNENAAGKKEVEERVSNNPTMVGALAGSLLCRKSAANAFAQHKRATTTTNIIEYLGHRLFTFMLRFY.

In terms of domain architecture, YjeF C-terminal spans 11 to 337; the sequence is ILPALEKVVP…EYLGHRLFTF (327 aa). Residues G127 and 180–186 each bind (6S)-NADPHX; that span reads NVMEHKR. ATP contacts are provided by residues 229–233 and 248–257; these read KGKTD and GSPRRCGGQG. Residue D258 coordinates (6S)-NADPHX.

It belongs to the NnrD/CARKD family. The cofactor is Mg(2+).

It catalyses the reaction (6S)-NADHX + ATP = ADP + phosphate + NADH + H(+). It carries out the reaction (6S)-NADPHX + ATP = ADP + phosphate + NADPH + H(+). Functionally, catalyzes the dehydration of the S-form of NAD(P)HX at the expense of ATP, which is converted to ADP. Together with NAD(P)HX epimerase, which catalyzes the epimerization of the S- and R-forms, the enzyme allows the repair of both epimers of NAD(P)HX, a damaged form of NAD(P)H that is a result of enzymatic or heat-dependent hydration. The polypeptide is ATP-dependent (S)-NAD(P)H-hydrate dehydratase (Physcomitrium patens (Spreading-leaved earth moss)).